A 546-amino-acid polypeptide reads, in one-letter code: FAD-dependent monooxygenase (546 aa).

The first 17 residues, 1–17, serve as a signal peptide directing secretion; sequence MYDVIVVGAGWCGLAAA. An FAD-binding site is contributed by Ile-106. Residues Asn-239 and Asn-343 are each glycosylated (N-linked (GlcNAc...) asparagine).

The protein belongs to the FAD-binding monooxygenase family. It depends on FAD as a cofactor.

It participates in antifungal biosynthesis. Functionally, FAD-dependent monooxygenase; part of the gene cluster that mediates the biosynthesis of the tetrahydropyranyl antifungal agent lanomycin that acts as an inhibitor of CYP51 and blocks the ergosterol biosynthesis. The biosynthesis probably begins with the formation of an hexaketide, followed by methionine mediated alkylation of C-2 and C-6, and methylation of the reduced C-3 oxygen, pyran forming reductive ring closure, oxygenation of C-4, beta-keto reduction, enoyl reduction and dehydration of the remaining oxygens, and finally, acylation with glycine to complete the biosynthesis. The sequence is that of FAD-dependent monooxygenase from Pyrenophora dematioidea (Helminthosporium dematioideum).